A 311-amino-acid polypeptide reads, in one-letter code: Porphobilinogen deaminase (311 aa).

Cys243 bears the S-(dipyrrolylmethanemethyl)cysteine mark.

It belongs to the HMBS family. In terms of assembly, monomer. Dipyrromethane serves as cofactor.

The catalysed reaction is 4 porphobilinogen + H2O = hydroxymethylbilane + 4 NH4(+). It functions in the pathway porphyrin-containing compound metabolism; protoporphyrin-IX biosynthesis; coproporphyrinogen-III from 5-aminolevulinate: step 2/4. Functionally, tetrapolymerization of the monopyrrole PBG into the hydroxymethylbilane pre-uroporphyrinogen in several discrete steps. This Aliivibrio salmonicida (strain LFI1238) (Vibrio salmonicida (strain LFI1238)) protein is Porphobilinogen deaminase.